The following is a 203-amino-acid chain: Suppressor/enhancer of lin-12 protein 9 (203 aa).

An N-terminal signal peptide occupies residues 1–18 (MNSLTWILAVLFVTPAAS). Residues 19–170 (YFIHVDANEE…RNINENTNSR (152 aa)) lie on the Lumenal side of the membrane. The GOLD domain occupies 28–110 (EQCFFDRLTS…PKAVMFTVEI (83 aa)). Residues 171–191 (VVMWAAFEAFVLVGMTVGQIF) form a helical membrane-spanning segment. Topologically, residues 192–203 (YLKRFFEVRTMV) are cytoplasmic.

It belongs to the EMP24/GP25L family.

The protein resides in the cytoplasmic vesicle membrane. Its subcellular location is the cytoplasmic vesicle. It localises to the COPI-coated vesicle membrane. The protein localises to the golgi apparatus membrane. In terms of biological role, may have a role in the negative regulation of lin-12 and glp-1 transport to the cell surface. May also have a role in a quality control mechanism for endoplasmic reticulum-Golgi transport; the budding of coatomer-coated and other species of coated vesicles, could bind cargo molecules to collect them into budding vesicles. Involved in regulating the expression of proteasomal subunits such as rpt-3 in order to confer resistance to proteasomal dysfunction. The sequence is that of Suppressor/enhancer of lin-12 protein 9 (sel-9) from Caenorhabditis elegans.